The following is a 51-amino-acid chain: Mitochondrial import receptor subunit TOM5 homolog (51 aa).

M1 carries the post-translational modification N-acetylmethionine. A Glycyl lysine isopeptide (Lys-Gly) (interchain with G-Cter in SUMO2) cross-link involves residue K10. Residues 27–45 (SIRNFLIYVALLRVTPYIL) traverse the membrane as a helical segment.

The protein belongs to the Tom5 family. Forms part of the preprotein translocase complex of the outer mitochondrial membrane (TOM complex) which consists of at least 7 different proteins (TOMM5, TOMM6, TOMM7, TOMM20, TOMM22, TOMM40 and TOMM70).

The protein resides in the mitochondrion outer membrane. This chain is Mitochondrial import receptor subunit TOM5 homolog, found in Mus musculus (Mouse).